The primary structure comprises 961 residues: Exportin-T (961 aa).

Belongs to the exportin family.

The protein localises to the cytoplasm. It is found in the nucleus. In terms of biological role, mediates the nuclear export of aminoacylated tRNAs. This chain is Exportin-T (xpot), found in Danio rerio (Zebrafish).